Reading from the N-terminus, the 433-residue chain is Enolase (433 aa).

Glutamine 167 serves as a coordination point for (2R)-2-phosphoglycerate. The active-site Proton donor is the glutamate 209. Aspartate 246, glutamate 291, and aspartate 318 together coordinate Mg(2+). Residues lysine 343, arginine 372, serine 373, and lysine 394 each contribute to the (2R)-2-phosphoglycerate site. The active-site Proton acceptor is lysine 343.

Belongs to the enolase family. Component of the RNA degradosome, a multiprotein complex involved in RNA processing and mRNA degradation. Mg(2+) serves as cofactor.

The protein localises to the cytoplasm. It localises to the secreted. The protein resides in the cell surface. The catalysed reaction is (2R)-2-phosphoglycerate = phosphoenolpyruvate + H2O. It participates in carbohydrate degradation; glycolysis; pyruvate from D-glyceraldehyde 3-phosphate: step 4/5. Functionally, catalyzes the reversible conversion of 2-phosphoglycerate (2-PG) into phosphoenolpyruvate (PEP). It is essential for the degradation of carbohydrates via glycolysis. This Tolumonas auensis (strain DSM 9187 / NBRC 110442 / TA 4) protein is Enolase.